The following is a 148-amino-acid chain: Putative pre-16S rRNA nuclease (148 aa).

Belongs to the YqgF nuclease family.

It is found in the cytoplasm. Its function is as follows. Could be a nuclease involved in processing of the 5'-end of pre-16S rRNA. In Colwellia psychrerythraea (strain 34H / ATCC BAA-681) (Vibrio psychroerythus), this protein is Putative pre-16S rRNA nuclease.